Reading from the N-terminus, the 309-residue chain is NAD kinase (309 aa).

Asp-89 (proton acceptor) is an active-site residue. NAD(+) contacts are provided by residues 89–90, 163–164, His-174, Arg-191, Asp-193, and 204–209; these read DG, NE, and TAYSLS.

The protein belongs to the NAD kinase family. A divalent metal cation serves as cofactor.

Its subcellular location is the cytoplasm. It catalyses the reaction NAD(+) + ATP = ADP + NADP(+) + H(+). In terms of biological role, involved in the regulation of the intracellular balance of NAD and NADP, and is a key enzyme in the biosynthesis of NADP. Catalyzes specifically the phosphorylation on 2'-hydroxyl of the adenosine moiety of NAD to yield NADP. The polypeptide is NAD kinase (Shewanella frigidimarina (strain NCIMB 400)).